The sequence spans 255 residues: Small ribosomal subunit protein eS1 (255 aa).

A compositionally biased stretch (basic residues) spans 1–18; it reads MAVGKNKRLSKGKKGLKK. The disordered stretch occupies residues 1–20; that stretch reads MAVGKNKRLSKGKKGLKKRV. At alanine 2 the chain carries N-acetylalanine; partial.

It belongs to the eukaryotic ribosomal protein eS1 family. In terms of assembly, component of the small ribosomal subunit. Mature ribosomes consist of a small (40S) and a large (60S) subunit. The 40S subunit contains about 33 different proteins and 1 molecule of RNA (18S). The 60S subunit contains about 49 different proteins and 3 molecules of RNA (25S, 5.8S and 5S).

Its subcellular location is the cytoplasm. This is Small ribosomal subunit protein eS1 from Coccidioides immitis (strain RS) (Valley fever fungus).